The following is a 182-amino-acid chain: Ribosome maturation factor RimM (182 aa).

Residues 103–182 form the PRC barrel domain; that stretch reads GDDYYWKDLM…VIEADWDPGF (80 aa).

This sequence belongs to the RimM family. Binds ribosomal protein uS19.

Its subcellular location is the cytoplasm. Its function is as follows. An accessory protein needed during the final step in the assembly of 30S ribosomal subunit, possibly for assembly of the head region. Essential for efficient processing of 16S rRNA. May be needed both before and after RbfA during the maturation of 16S rRNA. It has affinity for free ribosomal 30S subunits but not for 70S ribosomes. The sequence is that of Ribosome maturation factor RimM from Serratia proteamaculans (strain 568).